The chain runs to 323 residues: Chitinase 1 (323 aa).

Positions 1 to 20 (MRALAVVVVATAFAVVAVRG) are cleaved as a signal peptide. The Chitin-binding type-1 domain occupies 21–61 (EQCGSQAGGALCPNCLCCSQYGWCGSTSAYCGSGCQSQCSG). 8 disulfides stabilise this stretch: cysteine 23-cysteine 38, cysteine 32-cysteine 44, cysteine 35-cysteine 63, cysteine 37-cysteine 51, cysteine 55-cysteine 59, cysteine 100-cysteine 162, cysteine 176-cysteine 184, and cysteine 283-cysteine 315. Residue glutamate 144 is the Proton donor of the active site.

Belongs to the glycosyl hydrolase 19 family. Chitinase class I subfamily. As to expression, expressed in roots, leaves, sheaths and meristems.

It carries out the reaction Random endo-hydrolysis of N-acetyl-beta-D-glucosaminide (1-&gt;4)-beta-linkages in chitin and chitodextrins.. Functionally, hydrolyzes chitin and may play a role in defense against fungal pathogens containing chitin. This Oryza sativa subsp. japonica (Rice) protein is Chitinase 1 (Cht1).